A 353-amino-acid polypeptide reads, in one-letter code: tRNA N6-adenosine threonylcarbamoyltransferase (353 aa).

Fe cation contacts are provided by His109 and His113. Residues 136 to 140 (TVSGG), Asp169, Gly182, Asp186, and Asn284 each bind substrate. Position 312 (Asp312) interacts with Fe cation.

This sequence belongs to the KAE1 / TsaD family. Requires Fe(2+) as cofactor.

The protein resides in the cytoplasm. The enzyme catalyses L-threonylcarbamoyladenylate + adenosine(37) in tRNA = N(6)-L-threonylcarbamoyladenosine(37) in tRNA + AMP + H(+). Its function is as follows. Required for the formation of a threonylcarbamoyl group on adenosine at position 37 (t(6)A37) in tRNAs that read codons beginning with adenine. Is involved in the transfer of the threonylcarbamoyl moiety of threonylcarbamoyl-AMP (TC-AMP) to the N6 group of A37, together with TsaE and TsaB. TsaD likely plays a direct catalytic role in this reaction. The protein is tRNA N6-adenosine threonylcarbamoyltransferase of Chlorobaculum tepidum (strain ATCC 49652 / DSM 12025 / NBRC 103806 / TLS) (Chlorobium tepidum).